Consider the following 418-residue polypeptide: Glutamyl-tRNA reductase (418 aa).

Substrate contacts are provided by residues 49 to 52, Ser-109, 114 to 116, and Gln-120; these read TCNR and EPQ. The active-site Nucleophile is the Cys-50. 189-194 is a binding site for NADP(+); sequence GAGETI.

It belongs to the glutamyl-tRNA reductase family. As to quaternary structure, homodimer.

It carries out the reaction (S)-4-amino-5-oxopentanoate + tRNA(Glu) + NADP(+) = L-glutamyl-tRNA(Glu) + NADPH + H(+). It functions in the pathway porphyrin-containing compound metabolism; protoporphyrin-IX biosynthesis; 5-aminolevulinate from L-glutamyl-tRNA(Glu): step 1/2. Its function is as follows. Catalyzes the NADPH-dependent reduction of glutamyl-tRNA(Glu) to glutamate 1-semialdehyde (GSA). In Escherichia coli O9:H4 (strain HS), this protein is Glutamyl-tRNA reductase.